A 158-amino-acid polypeptide reads, in one-letter code: Large ribosomal subunit protein uL22 (158 aa).

Belongs to the universal ribosomal protein uL22 family. As to quaternary structure, part of the 50S ribosomal subunit.

Functionally, this protein binds specifically to 23S rRNA. It makes multiple contacts with different domains of the 23S rRNA in the assembled 50S subunit and ribosome. Its function is as follows. The globular domain of the protein is located near the polypeptide exit tunnel on the outside of the subunit, while an extended beta-hairpin is found that lines the wall of the exit tunnel in the center of the 70S ribosome. In Haloquadratum walsbyi (strain DSM 16790 / HBSQ001), this protein is Large ribosomal subunit protein uL22.